A 122-amino-acid polypeptide reads, in one-letter code: Large ribosomal subunit protein bL12 (122 aa).

The protein belongs to the bacterial ribosomal protein bL12 family. As to quaternary structure, homodimer. Part of the ribosomal stalk of the 50S ribosomal subunit. Forms a multimeric L10(L12)X complex, where L10 forms an elongated spine to which 2 to 4 L12 dimers bind in a sequential fashion. Binds GTP-bound translation factors.

Functionally, forms part of the ribosomal stalk which helps the ribosome interact with GTP-bound translation factors. Is thus essential for accurate translation. This Staphylococcus aureus (strain Mu50 / ATCC 700699) protein is Large ribosomal subunit protein bL12.